A 40-amino-acid chain; its full sequence is Photosystem II reaction center protein J (40 aa).

Residues 8-28 (IPLWIIGTVAGILVIGLIGIF) traverse the membrane as a helical segment.

The protein belongs to the PsbJ family. As to quaternary structure, PSII is composed of 1 copy each of membrane proteins PsbA, PsbB, PsbC, PsbD, PsbE, PsbF, PsbH, PsbI, PsbJ, PsbK, PsbL, PsbM, PsbT, PsbX, PsbY, PsbZ, Psb30/Ycf12, at least 3 peripheral proteins of the oxygen-evolving complex and a large number of cofactors. It forms dimeric complexes.

It is found in the plastid. Its subcellular location is the chloroplast thylakoid membrane. Its function is as follows. One of the components of the core complex of photosystem II (PSII). PSII is a light-driven water:plastoquinone oxidoreductase that uses light energy to abstract electrons from H(2)O, generating O(2) and a proton gradient subsequently used for ATP formation. It consists of a core antenna complex that captures photons, and an electron transfer chain that converts photonic excitation into a charge separation. This chain is Photosystem II reaction center protein J, found in Nicotiana sylvestris (Wood tobacco).